A 708-amino-acid polypeptide reads, in one-letter code: F-box protein MAX2 homolog A (708 aa).

Residues 2–49 form the F-box domain; sequence ATQLNDLPDVILSNIIAAVTDVRSRNSTSFVCRKWLVLERSTRVSLTL.

Part of a putative SCF (SKP1/Cullin/F-box) ubiquitin ligase complex. Interacts with DAD2. Interacts with KAI2IA in the presence of (-)-germacrene D. Mainly expressed in fully expanded leaves, lateral roots, axillary and shoot apex, and, to a lower extent, in internodes and nodes.

The protein localises to the nucleus. Component of SCF(ASK-cullin-F-box) E3 ubiquitin ligase complexes, which may mediate the ubiquitination and subsequent proteasomal degradation of target proteins. Is necessary for responses to strigolactones and may be involved in the ubiquitin-mediated degradation of specific proteins that activate axillary growth. Targets probably SMAX1A to degradation upon the formation of an E3 SCF ubiquitin ligase complex (ASK-cullin-F-box) containing MAX2A and KAI2IA in response to (-)-germacrene D in the stigma. In Petunia hybrida (Petunia), this protein is F-box protein MAX2 homolog A.